The chain runs to 493 residues: Galactose-1-phosphate uridylyltransferase 2 (493 aa).

This sequence belongs to the galactose-1-phosphate uridylyltransferase type 2 family.

The protein localises to the cytoplasm. The catalysed reaction is alpha-D-galactose 1-phosphate + UDP-alpha-D-glucose = alpha-D-glucose 1-phosphate + UDP-alpha-D-galactose. It functions in the pathway carbohydrate metabolism; galactose metabolism. This chain is Galactose-1-phosphate uridylyltransferase 2 (galT2), found in Streptococcus pneumoniae (strain ATCC BAA-255 / R6).